The sequence spans 107 residues: Defensin-like protein 242 (107 aa).

Residues 1 to 22 (MKVVAIFLASCVLFSLIPTHLS) form the signal peptide. Cystine bridges form between Cys-45-Cys-100, Cys-55-Cys-84, Cys-65-Cys-94, and Cys-82-Cys-96.

The protein belongs to the DEFL family.

It localises to the secreted. The chain is Defensin-like protein 242 (SCRL10) from Arabidopsis thaliana (Mouse-ear cress).